The chain runs to 24 residues: Glutamate dehydrogenase (24 aa).

It belongs to the Glu/Leu/Phe/Val dehydrogenases family. Homohexamer.

Its subcellular location is the cytoplasm. It catalyses the reaction L-glutamate + NAD(+) + H2O = 2-oxoglutarate + NH4(+) + NADH + H(+). It carries out the reaction L-glutamate + NADP(+) + H2O = 2-oxoglutarate + NH4(+) + NADPH + H(+). The protein is Glutamate dehydrogenase (gdhA) of Pyrococcus woesei.